The sequence spans 258 residues: GCN5-related N-acetyltransferase 2, chloroplastic (258 aa).

A chloroplast-targeting transit peptide spans 1-58 (MLLIPISSSSSSSISPPPNSYPSNHHSLFFSNLTFPIQHGSRKLKTLRLRANFWESIR). The segment at 107–194 (IIFSSGGEID…DHAFNATIWD (88 aa)) is interaction with begomoviruses NSP protein. Residues 107–258 (IIFSSGGEID…GIKGMFWYPK (152 aa)) enclose the N-acetyltransferase domain. Residues 195–197 (VLV), 203–208 (GQGLGK), 231–233 (DSQ), and Y238 contribute to the acetyl-CoA site. Y238 serves as the catalytic Proton donor.

This sequence belongs to the acetyltransferase family. GNAT subfamily. Oligomer. Interacts with begomoviruses NSP but not with CP. This interaction may allow NSP to recruit NSI monomers to acetylate viral genome-bound CP and thus regulate nuclear export of viral genome by NSP. S-sulfhydrated and activated by hydrogen sulfide H(2)S to promote melatonin accumulation and subsequent melatonin-dependent stomotal closure to combat osmotic stress. In terms of processing, autoacetylated. In terms of tissue distribution, highly expressed in cauline leaves and seeds, at lower levels in stems, siliques, inflorescences and rosettes leaves and at very low levels in roots. Expressed in the xylem parenchyma and phloem of the leaves and root, and in guard cells of young leaves.

The protein localises to the plastid. The protein resides in the chloroplast. It catalyses the reaction 5-methoxytryptamine + acetyl-CoA = melatonin + CoA + H(+). The enzyme catalyses L-lysyl-[histone] + acetyl-CoA = N(6)-acetyl-L-lysyl-[histone] + CoA + H(+). It carries out the reaction L-lysyl-[protein] + acetyl-CoA = N(6)-acetyl-L-lysyl-[protein] + CoA + H(+). The catalysed reaction is serotonin + acetyl-CoA = N-acetylserotonin + CoA + H(+). It catalyses the reaction N-terminal L-alanyl-[protein] + acetyl-CoA = N-terminal N(alpha)-acetyl-L-alanyl-[protein] + CoA + H(+). The enzyme catalyses N-terminal L-seryl-[protein] + acetyl-CoA = N-terminal N(alpha)-acetyl-L-seryl-[protein] + CoA + H(+). It carries out the reaction N-terminal L-valyl-[protein] + acetyl-CoA = N-terminal N(alpha)-acetyl-L-valyl-[protein] + CoA + H(+). The catalysed reaction is N-terminal glycyl-[protein] + acetyl-CoA = N-terminal N(alpha)-acetylglycyl-[protein] + CoA + H(+). It catalyses the reaction an N-terminal L-alpha-aminoacyl-[protein] + acetyl-CoA = N-terminal N(alpha)-acetyl-L-alpha-aminoacyl-[protein] + CoA + H(+). The enzyme catalyses N-terminal L-threonyl-[protein] + acetyl-CoA = N-terminal N(alpha)-acetyl-L-threonyl-[protein] + CoA + H(+). It carries out the reaction N-terminal L-methionyl-[protein] + acetyl-CoA = N-terminal N(alpha)-acetyl-L-methionyl-[protein] + CoA + H(+). The catalysed reaction is N-terminal L-leucyl-[protein] + acetyl-CoA = N-terminal N(alpha)-acetyl-L-leucyl-[protein] + CoA + H(+). Its activity is regulated as follows. Inhibited by the viral nuclear shuttle protein (NSP) that binds to the region required for oligomerization. Its function is as follows. Protein acetyltransferase with dual specificity triggering both N-alpha-acetylation (NTA), with a preference for alanine, serine, threonine, methionine and to a lower extent valine as substrates (can also use glycine and leucine), and epsilon-lysine acetylation (KA) of several plastid proteins. Triggers lysine acetylation in KEA1 and KEA2. Acetylates in vitro histones H2A and H3. Does not act as a transcriptional activator but required for the dynamic reorganization of thylakoid protein complexes and grana during photosynthetic state transitions. Involved in melatonin biosynthesis by catalyzing the formation of N-acetylserotonin (NAS) from serotonin and of melatonin (N-acetyl-5-methoxytryptamine) from 5-methoxytryptamine (5-MT). By triggering melatonin biosynthesis, contributes to the chloroplast protein quality control (CPQC), which plays a pivotal role in starch synthesis, and confers melatonin-associated tolerance to high light (HL) stress. Prevents the accumulation of oil and anthocyanin content in mature seeds and avoids seed germination in a melatonin-dependent manner, but promotes mucilage production in the seed coat. Contributes to melatonin-mediated anthocyanin production in cold-exposed seedlings. Implicated in melatonin-monitored circadian dynamics of stomatal aperture to minimize night water loss and promote drought tolerance, partly by triggering hydrogen sulfide H(2)S-dependent stomotal closure in response to osmotic stress. (Microbial infection) Required for begomovirus infection and systemic spread. In case of begomoviruses infection, acetylates the capsid protein (CP), but not the nuclear shuttle protein (NSP). Stimulates melatonin-triggered defense responses to the necrotrophic Botrytis cinerea. This is GCN5-related N-acetyltransferase 2, chloroplastic from Arabidopsis thaliana (Mouse-ear cress).